Here is a 437-residue protein sequence, read N- to C-terminus: tRNA-queuosine alpha-mannosyltransferase (437 aa).

This sequence belongs to the glycosyltransferase group 1 family. Glycosyltransferase 4 subfamily.

The protein resides in the cytoplasm. The protein localises to the nucleus. It carries out the reaction queuosine(34) in tRNA(Asp) + GDP-alpha-D-mannose = O-4''-alpha-D-mannosylqueuosine(34) in tRNA(Asp) + GDP + H(+). Functionally, glycosyltransferase that specifically catalyzes mannosylation of cytoplasmic tRNA(Asp) modified with queuosine at position 34 (queuosine(34)). Mannosylates the cyclopentene moiety of queuosine(34) in tRNA(Asp) to form mannosyl-queuosine(34). Mannosylation of queuosine(34) in tRNA(Asp) is required to slow-down elongation at cognate codons, GAC and GAU, thereby regulating protein translation. The sequence is that of tRNA-queuosine alpha-mannosyltransferase (gtdc1) from Xenopus tropicalis (Western clawed frog).